The primary structure comprises 198 residues: UDP-N-acetylglucosamine transferase subunit ALG13 (198 aa).

It belongs to the glycosyltransferase 28 family. In terms of assembly, heterodimer with ALG14 to form a functional enzyme.

It is found in the endoplasmic reticulum. It carries out the reaction an N-acetyl-alpha-D-glucosaminyl-diphospho-di-trans,poly-cis-dolichol + UDP-N-acetyl-alpha-D-glucosamine = an N,N'-diacetylchitobiosyl-diphospho-di-trans,poly-cis-dolichol + UDP + H(+). In terms of biological role, involved in protein N-glycosylation. Essential for the second step of the dolichol-linked oligosaccharide pathway. The sequence is that of UDP-N-acetylglucosamine transferase subunit ALG13 (ALG13) from Candida glabrata (strain ATCC 2001 / BCRC 20586 / JCM 3761 / NBRC 0622 / NRRL Y-65 / CBS 138) (Yeast).